Here is a 269-residue protein sequence, read N- to C-terminus: MSLYQRTNFQSHPYHLVWPSPWPFYNSLSLFILTTSGVLTMHGFSNMYIILFIAFINLVWCMTLWFRDIISEGTYLGNHTNAVQRGLNLGVGLFIASEALFFLAIFWTFFHSSLSPNVELGAQWPPLGIKAIDPFELPLLNNIILLSSGVTVNSNYHSLIQGNRKGALYGLVATILLAIVFTIFQGIEYSVSSFTISDGVYGSCFYFSTGFHGFHVLIGTAFLSVGLWRLLGYHLTDHHHLGYESGILYWHFVDVVWLILYVCIYFWGY.

Transmembrane regions (helical) follow at residues 24–44 (FYNSLSLFILTTSGVLTMHGF), 46–66 (NMYIILFIAFINLVWCMTLWF), 90–110 (GVGLFIASEALFFLAIFWTFF), 132–152 (IDPFELPLLNNIILLSSGVTV), 167–187 (ALYGLVATILLAIVFTIFQGI), 207–227 (FSTGFHGFHVLIGTAFLSVGL), and 247–267 (ILYWHFVDVVWLILYVCIYFW).

It belongs to the cytochrome c oxidase subunit 3 family. Component of the cytochrome c oxidase (complex IV, CIV), a multisubunit enzyme composed of a catalytic core of 3 subunits and several supernumerary subunits. The complex exists as a monomer or a dimer and forms supercomplexes (SCs) in the inner mitochondrial membrane with ubiquinol-cytochrome c oxidoreductase (cytochrome b-c1 complex, complex III, CIII).

Its subcellular location is the mitochondrion inner membrane. It carries out the reaction 4 Fe(II)-[cytochrome c] + O2 + 8 H(+)(in) = 4 Fe(III)-[cytochrome c] + 2 H2O + 4 H(+)(out). Functionally, component of the cytochrome c oxidase, the last enzyme in the mitochondrial electron transport chain which drives oxidative phosphorylation. The respiratory chain contains 3 multisubunit complexes succinate dehydrogenase (complex II, CII), ubiquinol-cytochrome c oxidoreductase (cytochrome b-c1 complex, complex III, CIII) and cytochrome c oxidase (complex IV, CIV), that cooperate to transfer electrons derived from NADH and succinate to molecular oxygen, creating an electrochemical gradient over the inner membrane that drives transmembrane transport and the ATP synthase. Cytochrome c oxidase is the component of the respiratory chain that catalyzes the reduction of oxygen to water. Electrons originating from reduced cytochrome c in the intermembrane space (IMS) are transferred via the dinuclear copper A center (CU(A)) of subunit 2 and heme A of subunit 1 to the active site in subunit 1, a binuclear center (BNC) formed by heme A3 and copper B (CU(B)). The BNC reduces molecular oxygen to 2 water molecules using 4 electrons from cytochrome c in the IMS and 4 protons from the mitochondrial matrix. The sequence is that of Cytochrome c oxidase subunit 3 (COXIII) from Trichophyton rubrum (Athlete's foot fungus).